The chain runs to 656 residues: uncharacterized protein (656 aa).

Helical transmembrane passes span 7-27 (QQVL…LNHL), 40-60 (LMAM…FWTL), and 210-230 (AVFI…AFTI). Positions 231–280 (TRPIRELLTGVKNIASGDFYQRIDLPFGGELGALIFNFNEMAERLEKYEQ) constitute an HAMP domain. In terms of domain architecture, PAS spans 289–359 (EKAKLETLVS…PILNDIIRKN (71 aa)). The 231-residue stretch at 424–654 (NVSHELRTPL…CFFFDLMIAK (231 aa)) folds into the Histidine kinase domain. The residue at position 427 (histidine 427) is a Phosphohistidine; by autocatalysis.

The protein resides in the plastid. It localises to the chloroplast membrane. It carries out the reaction ATP + protein L-histidine = ADP + protein N-phospho-L-histidine.. This is an uncharacterized protein from Porphyra purpurea (Red seaweed).